The primary structure comprises 124 residues: Glycine cleavage system H protein (124 aa).

The region spanning 22-104 (LVITGITDHA…YGKGWIYKIK (83 aa)) is the Lipoyl-binding domain. N6-lipoyllysine is present on Lys63.

The protein belongs to the GcvH family. In terms of assembly, the glycine cleavage system is composed of four proteins: P, T, L and H. (R)-lipoate serves as cofactor.

In terms of biological role, the glycine cleavage system catalyzes the degradation of glycine. The H protein shuttles the methylamine group of glycine from the P protein to the T protein. The sequence is that of Glycine cleavage system H protein from Acinetobacter baumannii (strain ACICU).